Reading from the N-terminus, the 184-residue chain is ATP synthase subunit b, chloroplastic (184 aa).

The chain crosses the membrane as a helical span at residues 27–49 (LATNPINLSVVLGVLIFFGKGVL).

It belongs to the ATPase B chain family. In terms of assembly, F-type ATPases have 2 components, F(1) - the catalytic core - and F(0) - the membrane proton channel. F(1) has five subunits: alpha(3), beta(3), gamma(1), delta(1), epsilon(1). F(0) has four main subunits: a(1), b(1), b'(1) and c(10-14). The alpha and beta chains form an alternating ring which encloses part of the gamma chain. F(1) is attached to F(0) by a central stalk formed by the gamma and epsilon chains, while a peripheral stalk is formed by the delta, b and b' chains.

It localises to the plastid. The protein resides in the chloroplast thylakoid membrane. Its function is as follows. F(1)F(0) ATP synthase produces ATP from ADP in the presence of a proton or sodium gradient. F-type ATPases consist of two structural domains, F(1) containing the extramembraneous catalytic core and F(0) containing the membrane proton channel, linked together by a central stalk and a peripheral stalk. During catalysis, ATP synthesis in the catalytic domain of F(1) is coupled via a rotary mechanism of the central stalk subunits to proton translocation. Component of the F(0) channel, it forms part of the peripheral stalk, linking F(1) to F(0). This is ATP synthase subunit b, chloroplastic from Eucalyptus globulus subsp. globulus (Tasmanian blue gum).